The following is a 425-amino-acid chain: Meiotic recombination protein spo-11 (425 aa).

Residues 1–38 form a disordered region; the sequence is MYEYSFNPNIDHEPGSVESQQSTIYSDSDDSDDSFLDD. The Topo IIA-type catalytic domain maps to 15 to 158; it reads GSVESQQSTI…LNILSCGRGI (144 aa). The span at 27-38 shows a compositional bias: acidic residues; it reads DSDDSDDSFLDD. The O-(5'-phospho-DNA)-tyrosine intermediate role is filled by Tyr119. Mg(2+)-binding residues include Glu202 and Asp255.

Belongs to the TOP6A family. Mg(2+) serves as cofactor.

Its subcellular location is the nucleus. The enzyme catalyses ATP-dependent breakage, passage and rejoining of double-stranded DNA.. Its function is as follows. Required for meiotic recombination. Mediates DNA cleavage that forms the double-strand breaks (DSB) that initiate meiotic recombination. The polypeptide is Meiotic recombination protein spo-11 (spo-11) (Caenorhabditis elegans).